The primary structure comprises 255 residues: Leucyl/phenylalanyl-tRNA--protein transferase (255 aa).

This sequence belongs to the L/F-transferase family.

The protein resides in the cytoplasm. It carries out the reaction N-terminal L-lysyl-[protein] + L-leucyl-tRNA(Leu) = N-terminal L-leucyl-L-lysyl-[protein] + tRNA(Leu) + H(+). It catalyses the reaction N-terminal L-arginyl-[protein] + L-leucyl-tRNA(Leu) = N-terminal L-leucyl-L-arginyl-[protein] + tRNA(Leu) + H(+). The enzyme catalyses L-phenylalanyl-tRNA(Phe) + an N-terminal L-alpha-aminoacyl-[protein] = an N-terminal L-phenylalanyl-L-alpha-aminoacyl-[protein] + tRNA(Phe). Functionally, functions in the N-end rule pathway of protein degradation where it conjugates Leu, Phe and, less efficiently, Met from aminoacyl-tRNAs to the N-termini of proteins containing an N-terminal arginine or lysine. This is Leucyl/phenylalanyl-tRNA--protein transferase from Polaromonas sp. (strain JS666 / ATCC BAA-500).